Here is a 130-residue protein sequence, read N- to C-terminus: Small ribosomal subunit protein uS9 (130 aa).

Positions Arg-106–Arg-130 are disordered. A compositionally biased stretch (basic residues) spans Val-111–Arg-130.

Belongs to the universal ribosomal protein uS9 family.

The chain is Small ribosomal subunit protein uS9 from Streptococcus pneumoniae (strain ATCC 700669 / Spain 23F-1).